Here is an 898-residue protein sequence, read N- to C-terminus: MPFYDNVYYPYPSDPPGTHSSAGIPSLLSSPQSQPSSGSQSRPAPSTMSGPLTSSGASTSIPPPFKFRSRRENVDWRRINAVDVDRVACEMDFQALQEHINAVTFCSVEGERCHRCQSPVDPALIKLFRLAQLTVEYLLHSQDCLSISLQAAEERLLAEAREREQICVQLQKKTQDAKALKEELKQRKKIIASQQAMFSAGISANYHKCQHCEKAFMNASFLQSHMQRRHPSEFDMKLMTDNQKKIQTVKLQDEINKLQEQLTLVTSQMETQQKDYTAKQEKELIQRQEEFKRQLEIWKEEEKMRMNSKIDEVKQACQRDMDSINQRNRNLETELLKLQQKNIQESMQSVQTQPNASTSNEHWQEVVKLQQKLHKQEVKWTGKMQKMKEDHDREKSLLQEELCKVSSAVSEGMEESRRQVQELSHRLQEQQQIITSQNKQMKQISSKPPTITVQREGVSTPSPETKAKVVVSEQSNSVHKLDPIVELSEEDKDSSSISESPTENRSWQKEVQELLKNPGLRRDMRLAAQHNLDDRLQSLGIKGVSGLSKNLYKSSMTQIISDRRKKLEEDPVYRRALKEISHKLEQRVKERNTEQPVKSKLHEQVVQSRPRSSSFPSTVTRVMSGPASKQQRTPQPVPRSRTNVPHKTSTPLQHRRTPPFSSDEDSSEEEEEEEEEEESSDEESPQMQKKTVLVNSSTAKAQNTAKTQSTAQSVRSAVALTSAEPTNVTTLSDSDWTDGSEMEEINLSQLHKHTDQNGNLKNVTHSNVKALGKSLEKQLAARGPKKPAGGVNTFLEKPTDVRNTRQNAKKELKYSDDDDDDDDDWDISSLEDVPAVAKPTQCPVPVRKSLDKSQDTSTSVWGSSTGKGHKPGLTDAGTASTLKSSLVTVSDWDDSDEI.

Residues 14-66 (DPPGTHSSAGIPSLLSSPQSQPSSGSQSRPAPSTMSGPLTSSGASTSIPPPFK) are disordered. The span at 25-46 (PSLLSSPQSQPSSGSQSRPAPS) shows a compositional bias: low complexity. The span at 47–60 (TMSGPLTSSGASTS) shows a compositional bias: polar residues. The stretch at 145-197 (LSISLQAAEERLLAEAREREQICVQLQKKTQDAKALKEELKQRKKIIASQQAM) forms a coiled coil. Residues 207 to 230 (HKCQHCEKAFMNASFLQSHMQRRH) form a C2H2-type zinc finger. 2 coiled-coil regions span residues 242-353 (NQKK…VQTQ) and 407-447 (SAVS…ISSK). Positions 435 to 463 (TSQNKQMKQISSKPPTITVQREGVSTPSP) are enriched in polar residues. Disordered regions lie at residues 435 to 509 (TSQN…SWQK), 585 to 739 (EQRV…WTDG), and 773 to 878 (KSLE…DAGT). Positions 495-505 (SSISESPTENR) are enriched in low complexity. Residues 573–590 (YRRALKEISHKLEQRVKE) are a coiled coil. Residues 605–652 (VVQSRPRSSSFPSTVTRVMSGPASKQQRTPQPVPRSRTNVPHKTSTPL) are compositionally biased toward polar residues. Over residues 662-684 (SDEDSSEEEEEEEEEEESSDEES) the composition is skewed to acidic residues. Polar residues-rich tracts occupy residues 685–715 (PQMQ…QSVR) and 723–734 (AEPTNVTTLSDS). Residues 797-815 (KPTDVRNTRQNAKKELKYS) show a composition bias toward basic and acidic residues. Positions 816 to 826 (DDDDDDDDDWD) are enriched in acidic residues. The span at 855–866 (DTSTSVWGSSTG) shows a compositional bias: polar residues.

It belongs to the DZIP C2H2-type zinc-finger protein family. Expressed throughout the embryo starting at 12 hours.

The protein localises to the cell projection. Its subcellular location is the cilium. It is found in the cytoplasm. It localises to the cytoskeleton. The protein resides in the cilium basal body. The protein localises to the microtubule organizing center. Its subcellular location is the centrosome. It is found in the centriole. It localises to the nucleus. Molecular adapter that recruits protein complexes required for cilium assembly and function to the cilium basal body. Required for establishment of left-right asymmetry during embryogenesis. Acts as a permissive factor that is required for the proper regulation of Hedgehog (Hh) target genes in response to Hh signals. Acts downstream of the Smoothened protein to modulate Gli activity in the somites of the developing embryo. This is Cilium assembly protein DZIP1 (dzip1) from Danio rerio (Zebrafish).